A 142-amino-acid chain; its full sequence is Large ribosomal subunit protein uL13 (142 aa).

It belongs to the universal ribosomal protein uL13 family. As to quaternary structure, part of the 50S ribosomal subunit.

This protein is one of the early assembly proteins of the 50S ribosomal subunit, although it is not seen to bind rRNA by itself. It is important during the early stages of 50S assembly. The polypeptide is Large ribosomal subunit protein uL13 (Vibrio vulnificus (strain CMCP6)).